Consider the following 496-residue polypeptide: Costunolide synthase (496 aa).

The chain crosses the membrane as a helical; Signal-anchor for type II membrane protein span at residues 4–24; sequence FTIFSLVVASLVFFACWALVA. N-linked (GlcNAc...) asparagine glycosylation is found at asparagine 26, asparagine 168, asparagine 280, and asparagine 412. Residue cysteine 434 participates in heme binding.

Belongs to the cytochrome P450 family. Requires heme as cofactor. In terms of tissue distribution, expressed in floral glandular trichomes.

The protein resides in the membrane. It carries out the reaction germacra-1(10),4,11(13)-trien-12-oate + reduced [NADPH--hemoprotein reductase] + O2 = (+)-costunolide + oxidized [NADPH--hemoprotein reductase] + 2 H2O. Its pathway is secondary metabolite biosynthesis; terpenoid biosynthesis. Functionally, involved in the biosynthesis of germacrene-derived sesquiterpene lactones. Component of the parthenolide biosynthetic pathway; parthenolide and conjugates are promising anti-cancer drugs highly active against colon cancer cells. Hydroxylates germacrene A acid to 6-alpha-hydroxy-germacrene A acid, a precursor of sesquiterpene lactones that spontaneously undergoes a lactonization which yields costunolide. The protein is Costunolide synthase of Tanacetum parthenium (Feverfew).